Consider the following 414-residue polypeptide: Serine hydroxymethyltransferase (414 aa).

Residues leucine 118 and 122 to 124 (GHL) each bind (6S)-5,6,7,8-tetrahydrofolate. Lysine 227 carries the N6-(pyridoxal phosphate)lysine modification. Residues glutamate 240 and 350–352 (SPF) each bind (6S)-5,6,7,8-tetrahydrofolate.

Belongs to the SHMT family. Homodimer. It depends on pyridoxal 5'-phosphate as a cofactor.

The protein localises to the cytoplasm. It carries out the reaction (6R)-5,10-methylene-5,6,7,8-tetrahydrofolate + glycine + H2O = (6S)-5,6,7,8-tetrahydrofolate + L-serine. It functions in the pathway one-carbon metabolism; tetrahydrofolate interconversion. The protein operates within amino-acid biosynthesis; glycine biosynthesis; glycine from L-serine: step 1/1. Functionally, catalyzes the reversible interconversion of serine and glycine with tetrahydrofolate (THF) serving as the one-carbon carrier. This reaction serves as the major source of one-carbon groups required for the biosynthesis of purines, thymidylate, methionine, and other important biomolecules. Also exhibits THF-independent aldolase activity toward beta-hydroxyamino acids, producing glycine and aldehydes, via a retro-aldol mechanism. In Bacillus thuringiensis (strain Al Hakam), this protein is Serine hydroxymethyltransferase.